We begin with the raw amino-acid sequence, 316 residues long: tRNA-cytidine(32) 2-sulfurtransferase (316 aa).

The PP-loop motif signature appears at 52–57 (SGGKDS). The [4Fe-4S] cluster site is built by C127, C130, and C218.

Belongs to the TtcA family. Homodimer. Mg(2+) serves as cofactor. Requires [4Fe-4S] cluster as cofactor.

The protein localises to the cytoplasm. It carries out the reaction cytidine(32) in tRNA + S-sulfanyl-L-cysteinyl-[cysteine desulfurase] + AH2 + ATP = 2-thiocytidine(32) in tRNA + L-cysteinyl-[cysteine desulfurase] + A + AMP + diphosphate + H(+). It participates in tRNA modification. Functionally, catalyzes the ATP-dependent 2-thiolation of cytidine in position 32 of tRNA, to form 2-thiocytidine (s(2)C32). The sulfur atoms are provided by the cysteine/cysteine desulfurase (IscS) system. This chain is tRNA-cytidine(32) 2-sulfurtransferase, found in Haemophilus ducreyi (strain 35000HP / ATCC 700724).